Consider the following 571-residue polypeptide: Zinc finger protein 181 (571 aa).

The 73-residue stretch at 4 to 76 folds into the KRAB domain; sequence VTFNDVAIDF…EKKLSKGMIP (73 aa). Residues K109 and K126 each participate in a glycyl lysine isopeptide (Lys-Gly) (interchain with G-Cter in SUMO2) cross-link. C2H2-type zinc fingers lie at residues 237-259, 265-287, 293-315, 321-343, 349-371, 377-399, 405-427, 433-455, 461-483, 489-511, and 517-539; these read YTCS…WRIH, YECR…LISH, YKCI…QSTH, YECM…LRIH, YECR…QKIH, YECR…QRIH, YECN…QSIH, FECQ…LRNH, YECS…HRIH, YECI…QRIH, and YKCN…QRVH.

It belongs to the krueppel C2H2-type zinc-finger protein family.

It is found in the nucleus. Its function is as follows. May be involved in transcriptional regulation. In Homo sapiens (Human), this protein is Zinc finger protein 181 (ZNF181).